The primary structure comprises 171 residues: MVKPKRLLSLLLRLIAFGATLAAVIIMATSHEKGSFFALSYEAKYSDTPAFKYFVIANAIVTVYGFLALFIPSESPLWRLVLALDLVFTMLLISSISAALAVAQVGKKGNSSAGWLPVCGQVTKYCNQVTGALVAGFIAIITYIILLLYSIYTFLNSLLGKTPCRLSSPGI.

Residues 1–6 (MVKPKR) are Cytoplasmic-facing. A helical transmembrane segment spans residues 7 to 27 (LLSLLLRLIAFGATLAAVIIM). Topologically, residues 28 to 52 (ATSHEKGSFFALSYEAKYSDTPAFK) are extracellular. The helical transmembrane segment at 53–73 (YFVIANAIVTVYGFLALFIPS) threads the bilayer. Residues 74–79 (ESPLWR) are Cytoplasmic-facing. The chain crosses the membrane as a helical span at residues 80–100 (LVLALDLVFTMLLISSISAAL). Residues 101-130 (AVAQVGKKGNSSAGWLPVCGQVTKYCNQVT) lie on the Extracellular side of the membrane. N-linked (GlcNAc...) asparagine glycosylation is present at Asn-110. A helical membrane pass occupies residues 131 to 151 (GALVAGFIAIITYIILLLYSI). Topologically, residues 152–171 (YTFLNSLLGKTPCRLSSPGI) are cytoplasmic.

This sequence belongs to the Casparian strip membrane proteins (CASP) family. Homodimer and heterodimers.

It is found in the cell membrane. The sequence is that of CASP-like protein 1C3 from Populus trichocarpa (Western balsam poplar).